Here is a 404-residue protein sequence, read N- to C-terminus: Serine/threonine transporter SstT (404 aa).

The next 9 helical transmembrane spans lie at 11–31 (IINA…IILA), 44–64 (LGGL…FVLV), 82–102 (IISL…TMSF), 144–164 (TANY…LHHA), 179–199 (VSFI…GLVA), 218–238 (GVLL…MVFI), 290–310 (IPLG…VLTL), 316–336 (MGIQ…AISA), and 363–383 (VAMQ…SAET).

Belongs to the dicarboxylate/amino acid:cation symporter (DAACS) (TC 2.A.23) family.

The protein resides in the cell inner membrane. The enzyme catalyses L-serine(in) + Na(+)(in) = L-serine(out) + Na(+)(out). The catalysed reaction is L-threonine(in) + Na(+)(in) = L-threonine(out) + Na(+)(out). Functionally, involved in the import of serine and threonine into the cell, with the concomitant import of sodium (symport system). This chain is Serine/threonine transporter SstT, found in Desulfotalea psychrophila (strain LSv54 / DSM 12343).